Here is a 1090-residue protein sequence, read N- to C-terminus: Leucine-rich repeat receptor-like serine/threonine-protein kinase RGI4 (1090 aa).

Residues 1-20 (MPRNPRFCFFLFLLFHSSLF) form the signal peptide. Residues 21–702 (FSIPCFSIDE…IQTRHRSAVK (682 aa)) are Extracellular-facing. An LRR 1 repeat occupies 36 to 59 (LSWKSQLNISGDALSSWKASESNP). N-linked (GlcNAc...) asparagine glycosylation occurs at asparagine 43. Cysteine 60 and cysteine 67 are disulfide-bonded. LRR repeat units lie at residues 95-119 (IKSL…LGDL), 120-143 (SELE…IFKL), 145-166 (KLKI…ELGN), and 168-191 (VNLI…IGEL). The N-linked (GlcNAc...) asparagine glycan is linked to asparagine 107. 4 consecutive short sequence motifs (small peptide recognition) follow at residues 176–177 (FD), 198–201 (RAGG), 221–226 (TLGLAE), and tyrosine 249. 7 LRR repeats span residues 216–240 (CESL…IGNL), 242–264 (KVQT…IGNC), 265–288 (TELQ…MGRL), 289–312 (KKLQ…LGTC), 314–335 (ELFL…SFGN), 336–360 (LPNL…LANC), and 362–386 (KLTH…KLTS). A glycan (N-linked (GlcNAc...) asparagine) is linked at asparagine 263. The CLE45 peptide binding motif lies at 269 to 273 (NLYLY). A Small peptide recognition motif is present at residues 271–273 (YLY). Short sequence motifs (small peptide recognition) lie at residues 319–322 (DLSE) and 341–343 (ELQ). Asparagine 359 carries N-linked (GlcNAc...) asparagine glycosylation. Short sequence motifs (small peptide recognition) lie at residues 389-393 (MFFAW) and 415-418 (DLSY). 11 LRR repeats span residues 408-432 (CQEL…IFEI), 434-456 (NLTK…IGNC), 457-480 (TNLY…IGNL), 481-504 (KNLN…ISGC), 506-526 (SLEF…GTLP), 527-550 (KSLQ…IGSL), 551-574 (TELT…ISSC), 576-598 (SLQL…LGRI), 600-622 (SLAI…RFSS), 623-646 (LTNL…LADL), and 647-670 (QNLV…LFFR). Asparagine 420 and asparagine 434 each carry an N-linked (GlcNAc...) asparagine glycan. The Small peptide recognition motif lies at 437 to 441 (KLLLL). Asparagine 455 carries N-linked (GlcNAc...) asparagine glycosylation. A Small peptide recognition motif is present at residues 461-463 (RLR). Residue asparagine 606 is glycosylated (N-linked (GlcNAc...) asparagine). Asparagine 653 carries an N-linked (GlcNAc...) asparagine glycan. The helical transmembrane segment at 703 to 723 (VTMSILVAASVVLVLMAVYTL) threads the bilayer. The Cytoplasmic portion of the chain corresponds to 724–1090 (VKAQRITGKQ…CSFAYSDESV (367 aa)). A Protein kinase domain is found at 758-1040 (LTSANVIGTG…KDIVAMLKEI (283 aa)). Residues 764–772 (IGTGSSGVV) and lysine 786 each bind ATP. Phosphotyrosine occurs at positions 829 and 869. Aspartate 882 serves as the catalytic Proton acceptor. Tyrosine 932 carries the post-translational modification Phosphotyrosine. One copy of the LRR 24 repeat lies at 1037-1060 (LKEIRQFDMDRSESDMIKGGKCEK). The segment at 1054–1079 (KGGKCEKWQPQPLPPEKIVSTPRGSS) is disordered.

The protein belongs to the protein kinase superfamily. Ser/Thr protein kinase family. As to quaternary structure, self-interacts. Interacts with RGF1; this interaction triggers its phosphorylation and ubiquitination and the formation of heterodimers with SERK1. In terms of processing, autophosphorylated. Post-translationally, phosphorylated and ubiquitinated upon interaction with RGF1, thus leading to activation a subsequent degradation. In terms of tissue distribution, expressed in floers, pollen grains and stipules. Present in roots.

It is found in the cell membrane. It catalyses the reaction L-seryl-[protein] + ATP = O-phospho-L-seryl-[protein] + ADP + H(+). It carries out the reaction L-threonyl-[protein] + ATP = O-phospho-L-threonyl-[protein] + ADP + H(+). Functionally, receptor with a serine/threonine-protein kinase activity. Together with SKM1, LRR-rich receptor-like kinase (LRR-RLK) required for male fertility by the perception of CLE43 and CLE45 peptides and the transduction of their promoting action in pollen tubes, especially under relatively high temperature (at 30 degrees Celsius), thus conferring tolerance against high temperature probably through the maintenance of mitochondrial activity. Seems to not be involved in the perception of CLE45 peptide in roots. Together with RGI1, RGI2, RGI3, RGI4 and RGI5, acts as receptor of RGF1, a peptide hormone that maintains the postembryonic root stem cell niche by regulating the expression levels and patterns of the transcription factor PLETHORA (PLT). Links RGF1 signal with its downstream components. The polypeptide is Leucine-rich repeat receptor-like serine/threonine-protein kinase RGI4 (Arabidopsis thaliana (Mouse-ear cress)).